The primary structure comprises 117 residues: Histone-like protein Hq1 (117 aa).

Composition is skewed to basic residues over residues methionine 1–alanine 17 and arginine 39–lysine 50. Positions methionine 1–alanine 117 are disordered. The segment covering alanine 51–arginine 68 has biased composition (basic and acidic residues). Over residues alanine 71–alanine 117 the composition is skewed to basic residues.

Its function is as follows. Binds DNA in vitro. The protein is Histone-like protein Hq1 (hcbA) of Coxiella burnetii (strain RSA 493 / Nine Mile phase I).